Consider the following 117-residue polypeptide: MTRVKRGNVARKRRKKILKLAKGFRGSHSKLFRTANQQVMKALRNAYRDRRKKKRDFRRLWITRINASARQNGISYSKLTGQMKKANIQLNRKMLAQLAVLDPQAFAKVVEVASQAQ.

The protein belongs to the bacterial ribosomal protein bL20 family.

In terms of biological role, binds directly to 23S ribosomal RNA and is necessary for the in vitro assembly process of the 50S ribosomal subunit. It is not involved in the protein synthesizing functions of that subunit. This Gloeothece citriformis (strain PCC 7424) (Cyanothece sp. (strain PCC 7424)) protein is Large ribosomal subunit protein bL20.